Reading from the N-terminus, the 165-residue chain is UPF0262 protein Sala_0765 (165 aa).

Belongs to the UPF0262 family.

This chain is UPF0262 protein Sala_0765, found in Sphingopyxis alaskensis (strain DSM 13593 / LMG 18877 / RB2256) (Sphingomonas alaskensis).